Consider the following 298-residue polypeptide: MSETGLLNPASIRRIADQIGLRPTKTRGQNFVHDANTVRRIVSLAQVGAADRVIEVGPGLGSLTLGLLETGAEVVAIEIDEVLANQLPGTVAERMPGAAERLEVVLSDALDVKVIPGAEPTALVANLPYNVAVPVLLHMLAICPQWSTGVVMVQSEVADRLVAAPGSKIYGVPSAKLAWYAEAIRVGNVPPTVFWPVPNVDSGLVRITRRRPPHVDGRDPRVTRSQVFRVVDAAFASRRKMLRSALAGLCGGSMAASELITAAGIDPTARGEALDIGDLARVVEALAQAGALSDSGQV.

Positions 30, 32, 57, 78, 108, and 126 each coordinate S-adenosyl-L-methionine.

Belongs to the class I-like SAM-binding methyltransferase superfamily. rRNA adenine N(6)-methyltransferase family. RsmA subfamily.

The protein localises to the cytoplasm. It carries out the reaction adenosine(1518)/adenosine(1519) in 16S rRNA + 4 S-adenosyl-L-methionine = N(6)-dimethyladenosine(1518)/N(6)-dimethyladenosine(1519) in 16S rRNA + 4 S-adenosyl-L-homocysteine + 4 H(+). In terms of biological role, specifically dimethylates two adjacent adenosines (A1518 and A1519) in the loop of a conserved hairpin near the 3'-end of 16S rRNA in the 30S particle. May play a critical role in biogenesis of 30S subunits. This Cutibacterium acnes (strain DSM 16379 / KPA171202) (Propionibacterium acnes) protein is Ribosomal RNA small subunit methyltransferase A.